The sequence spans 263 residues: Putative S-adenosyl-L-methionine-dependent methyltransferase Mkms_0098 (263 aa).

Residues Asp121 and 150 to 151 contribute to the S-adenosyl-L-methionine site; that span reads ES.

The protein belongs to the UPF0677 family.

Functionally, exhibits S-adenosyl-L-methionine-dependent methyltransferase activity. This is Putative S-adenosyl-L-methionine-dependent methyltransferase Mkms_0098 from Mycobacterium sp. (strain KMS).